Consider the following 510-residue polypeptide: ATP synthase subunit alpha (510 aa).

G169–T176 is a binding site for ATP.

This sequence belongs to the ATPase alpha/beta chains family. In terms of assembly, F-type ATPases have 2 components, CF(1) - the catalytic core - and CF(0) - the membrane proton channel. CF(1) has five subunits: alpha(3), beta(3), gamma(1), delta(1), epsilon(1). CF(0) has three main subunits: a(1), b(2) and c(9-12). The alpha and beta chains form an alternating ring which encloses part of the gamma chain. CF(1) is attached to CF(0) by a central stalk formed by the gamma and epsilon chains, while a peripheral stalk is formed by the delta and b chains.

It is found in the cell inner membrane. The enzyme catalyses ATP + H2O + 4 H(+)(in) = ADP + phosphate + 5 H(+)(out). Its function is as follows. Produces ATP from ADP in the presence of a proton gradient across the membrane. The alpha chain is a regulatory subunit. This Rickettsia felis (strain ATCC VR-1525 / URRWXCal2) (Rickettsia azadi) protein is ATP synthase subunit alpha.